We begin with the raw amino-acid sequence, 86 residues long: Large ribosomal subunit protein uL23 (86 aa).

The protein belongs to the universal ribosomal protein uL23 family. In terms of assembly, part of the 50S ribosomal subunit. Contacts protein L29.

In terms of biological role, binds to 23S rRNA. One of the proteins that surrounds the polypeptide exit tunnel on the outside of the ribosome. This chain is Large ribosomal subunit protein uL23, found in Thermococcus kodakarensis (strain ATCC BAA-918 / JCM 12380 / KOD1) (Pyrococcus kodakaraensis (strain KOD1)).